The chain runs to 343 residues: CRISPR-associated endonuclease Cas1 1 (343 aa).

Mn(2+) is bound by residues Glu166, His234, and Glu249.

It belongs to the CRISPR-associated endonuclease Cas1 family. Homodimer, forms a heterotetramer with a Cas2 homodimer. It depends on Mg(2+) as a cofactor. The cofactor is Mn(2+).

Its function is as follows. CRISPR (clustered regularly interspaced short palindromic repeat), is an adaptive immune system that provides protection against mobile genetic elements (viruses, transposable elements and conjugative plasmids). CRISPR clusters contain spacers, sequences complementary to antecedent mobile elements, and target invading nucleic acids. CRISPR clusters are transcribed and processed into CRISPR RNA (crRNA). Acts as a dsDNA endonuclease. Involved in the integration of spacer DNA into the CRISPR cassette. The sequence is that of CRISPR-associated endonuclease Cas1 1 from Chlorobaculum tepidum (strain ATCC 49652 / DSM 12025 / NBRC 103806 / TLS) (Chlorobium tepidum).